We begin with the raw amino-acid sequence, 284 residues long: Glutamate 5-kinase 2 (284 aa).

Residue Lys-26 participates in ATP binding. 3 residues coordinate substrate: Ser-67, Asp-154, and Asn-166. Residues 186–187 and 228–234 contribute to the ATP site; these read SD and SGGMVTK.

This sequence belongs to the glutamate 5-kinase family.

It localises to the cytoplasm. It catalyses the reaction L-glutamate + ATP = L-glutamyl 5-phosphate + ADP. The protein operates within amino-acid biosynthesis; L-proline biosynthesis; L-glutamate 5-semialdehyde from L-glutamate: step 1/2. Its function is as follows. Catalyzes the transfer of a phosphate group to glutamate to form L-glutamate 5-phosphate. This Mesorhizobium japonicum (strain LMG 29417 / CECT 9101 / MAFF 303099) (Mesorhizobium loti (strain MAFF 303099)) protein is Glutamate 5-kinase 2.